The chain runs to 359 residues: Methylthioribose-1-phosphate isomerase (359 aa).

Residues 52–54 (RGA), Arg-90, and Gln-200 each bind substrate. Catalysis depends on Asp-241, which acts as the Proton donor. A substrate-binding site is contributed by 251 to 252 (NK).

This sequence belongs to the eIF-2B alpha/beta/delta subunits family. MtnA subfamily.

The catalysed reaction is 5-(methylsulfanyl)-alpha-D-ribose 1-phosphate = 5-(methylsulfanyl)-D-ribulose 1-phosphate. It functions in the pathway amino-acid biosynthesis; L-methionine biosynthesis via salvage pathway; L-methionine from S-methyl-5-thio-alpha-D-ribose 1-phosphate: step 1/6. Its function is as follows. Catalyzes the interconversion of methylthioribose-1-phosphate (MTR-1-P) into methylthioribulose-1-phosphate (MTRu-1-P). This Sulfurimonas denitrificans (strain ATCC 33889 / DSM 1251) (Thiomicrospira denitrificans (strain ATCC 33889 / DSM 1251)) protein is Methylthioribose-1-phosphate isomerase.